A 159-amino-acid chain; its full sequence is 2-C-methyl-D-erythritol 2,4-cyclodiphosphate synthase (159 aa).

Residues Asp8 and His10 each coordinate a divalent metal cation. Residues 8 to 10 and 34 to 35 each bind 4-CDP-2-C-methyl-D-erythritol 2-phosphate; these read DVH and HS. His42 lines the a divalent metal cation pocket. 4-CDP-2-C-methyl-D-erythritol 2-phosphate-binding positions include 56–58, 61–65, 132–135, Phe139, and Arg142; these read DIG, FPDTD, and TTTE.

The protein belongs to the IspF family. As to quaternary structure, homotrimer. A divalent metal cation serves as cofactor.

The catalysed reaction is 4-CDP-2-C-methyl-D-erythritol 2-phosphate = 2-C-methyl-D-erythritol 2,4-cyclic diphosphate + CMP. The protein operates within isoprenoid biosynthesis; isopentenyl diphosphate biosynthesis via DXP pathway; isopentenyl diphosphate from 1-deoxy-D-xylulose 5-phosphate: step 4/6. Functionally, involved in the biosynthesis of isopentenyl diphosphate (IPP) and dimethylallyl diphosphate (DMAPP), two major building blocks of isoprenoid compounds. Catalyzes the conversion of 4-diphosphocytidyl-2-C-methyl-D-erythritol 2-phosphate (CDP-ME2P) to 2-C-methyl-D-erythritol 2,4-cyclodiphosphate (ME-CPP) with a corresponding release of cytidine 5-monophosphate (CMP). This chain is 2-C-methyl-D-erythritol 2,4-cyclodiphosphate synthase, found in Finegoldia magna (strain ATCC 29328 / DSM 20472 / WAL 2508) (Peptostreptococcus magnus).